We begin with the raw amino-acid sequence, 111 residues long: MMENKNLKFIQNAIKKNKVVLFMKGTKEMPACGFSGTVVAILNKLGVEFSDINVLFDTSLREDLKKFSDWPTFPQLYINGELVGGCDIVKELYQNGELEKMLKDETKLIKN.

The region spanning 7–109 (LKFIQNAIKK…KMLKDETKLI (103 aa)) is the Glutaredoxin domain. Lys-24 lines the glutathione pocket. Cys-32 serves as a coordination point for [2Fe-2S] cluster. Glutathione-binding positions include Arg-61, Phe-73, and 86–87 (CD).

It belongs to the glutaredoxin family. Monothiol subfamily.

The chain is Probable monothiol glutaredoxin 2 (grxC2) from Rickettsia typhi (strain ATCC VR-144 / Wilmington).